The sequence spans 555 residues: Exodeoxyribonuclease 7 large subunit (555 aa).

It belongs to the XseA family. Heterooligomer composed of large and small subunits.

The protein resides in the cytoplasm. It carries out the reaction Exonucleolytic cleavage in either 5'- to 3'- or 3'- to 5'-direction to yield nucleoside 5'-phosphates.. Its function is as follows. Bidirectionally degrades single-stranded DNA into large acid-insoluble oligonucleotides, which are then degraded further into small acid-soluble oligonucleotides. The chain is Exodeoxyribonuclease 7 large subunit from Chlamydia felis (strain Fe/C-56) (Chlamydophila felis).